Here is a 347-residue protein sequence, read N- to C-terminus: NADH-ubiquinone oxidoreductase chain 2 (347 aa).

10 helical membrane passes run 13-33, 56-76, 96-116, 123-143, 149-169, 178-198, 201-221, 247-267, 274-294, and 326-346; these read IFAG…WVGL, AIKY…AILF, LMIM…FWVP, PLTS…SIMY, LNVS…SWGG, ILAY…PYNP, TILN…LLNL, TLLS…WAII, NSLI…YFYL, and LPTL…MLMI.

It belongs to the complex I subunit 2 family. As to quaternary structure, core subunit of respiratory chain NADH dehydrogenase (Complex I) which is composed of 45 different subunits. Interacts with TMEM242.

It is found in the mitochondrion inner membrane. It carries out the reaction a ubiquinone + NADH + 5 H(+)(in) = a ubiquinol + NAD(+) + 4 H(+)(out). Functionally, core subunit of the mitochondrial membrane respiratory chain NADH dehydrogenase (Complex I) which catalyzes electron transfer from NADH through the respiratory chain, using ubiquinone as an electron acceptor. Essential for the catalytic activity and assembly of complex I. The chain is NADH-ubiquinone oxidoreductase chain 2 from Homo sapiens (Human).